Reading from the N-terminus, the 3174-residue chain is Probable polyketide synthase 15 (3174 aa).

Residues 23 to 474 enclose the Ketosynthase family 3 (KS3) domain; sequence NDEIAIVGIG…GSNCCLILSQ (452 aa). Catalysis depends on for beta-ketoacyl synthase activity residues cysteine 194, histidine 342, and histidine 397. 2 coiled-coil regions span residues 472-509 and 574-604; these read LSQFKNNENQQQQQQQQQQQQQQQQQQQQQRGQQQYDN and EFNKQKQSQKEKEKEKEREGEEKEQLNRVQT. Residues 578 to 599 show a composition bias toward basic and acidic residues; it reads QKQSQKEKEKEKEREGEEKEQL. Residues 578 to 601 are disordered; that stretch reads QKQSQKEKEKEKEREGEEKEQLNR. The segment at 707–740 is acyl/malonyl transferase; it reads GIEASFIVGHSLGEIPAAYCSGMITLDTLCYLIY. Catalysis depends on serine 717, which acts as the For acyl/malonyl transferase activity. An N-terminal hotdog fold region spans residues 1034-1156; sequence IDILGLSNYD…ANFQLLNNNN (123 aa). Residues 1034–1332 enclose the PKS/mFAS DH domain; it reads IDILGLSNYD…CKSLKIVKNP (299 aa). The active-site Proton acceptor; for dehydratase activity is histidine 1068. The C-terminal hotdog fold stretch occupies residues 1182–1332; that stretch reads NKTKISRIDL…CKSLKIVKNP (151 aa). Catalysis depends on aspartate 1241, which acts as the Proton donor; for dehydratase activity. A coiled-coil region spans residues 1758 to 1793; sequence LEININNNNNNNNNNNNNNNNNNNNNNNNNNYEDNV. The Carrier domain maps to 2653-2730; sequence VDSLNIKDIF…LVIKIIITAI (78 aa). Serine 2690 is modified (O-(pantetheine 4'-phosphoryl)serine).

It depends on pantetheine 4'-phosphate as a cofactor.

Functionally, probable polyketide synthase. The sequence is that of Probable polyketide synthase 15 (pks15) from Dictyostelium discoideum (Social amoeba).